A 136-amino-acid chain; its full sequence is Protein NrdI (136 aa).

Belongs to the NrdI family.

Probably involved in ribonucleotide reductase function. The polypeptide is Protein NrdI (Erwinia tasmaniensis (strain DSM 17950 / CFBP 7177 / CIP 109463 / NCPPB 4357 / Et1/99)).